A 122-amino-acid chain; its full sequence is Small ribosomal subunit protein uS13 (122 aa).

A disordered region spans residues 98–122 (VRGQRTHTNARTRKGPAKAIAGKKK).

It belongs to the universal ribosomal protein uS13 family. In terms of assembly, part of the 30S ribosomal subunit. Forms a loose heterodimer with protein S19. Forms two bridges to the 50S subunit in the 70S ribosome.

Its function is as follows. Located at the top of the head of the 30S subunit, it contacts several helices of the 16S rRNA. In the 70S ribosome it contacts the 23S rRNA (bridge B1a) and protein L5 of the 50S subunit (bridge B1b), connecting the 2 subunits; these bridges are implicated in subunit movement. Contacts the tRNAs in the A and P-sites. In Jannaschia sp. (strain CCS1), this protein is Small ribosomal subunit protein uS13.